We begin with the raw amino-acid sequence, 227 residues long: Urease accessory protein UreF (227 aa).

Belongs to the UreF family. UreD, UreF and UreG form a complex that acts as a GTP-hydrolysis-dependent molecular chaperone, activating the urease apoprotein by helping to assemble the nickel containing metallocenter of UreC. The UreE protein probably delivers the nickel.

The protein localises to the cytoplasm. In terms of biological role, required for maturation of urease via the functional incorporation of the urease nickel metallocenter. This Shewanella halifaxensis (strain HAW-EB4) protein is Urease accessory protein UreF.